Reading from the N-terminus, the 139-residue chain is S-protein homolog 14 (139 aa).

A signal peptide spans 1-20; sequence MNRFIIFMFVVVTYFGLNVA. Asn-136 is a glycosylation site (N-linked (GlcNAc...) asparagine).

This sequence belongs to the plant self-incompatibility (S1) protein family.

The protein resides in the secreted. The sequence is that of S-protein homolog 14 from Arabidopsis thaliana (Mouse-ear cress).